Here is a 159-residue protein sequence, read N- to C-terminus: Transcriptional repressor NrdR (159 aa).

A zinc finger spans residues 3-34; sequence CPFCGAEDTSVVDSRISEEGARIRRRRRCVEC. The region spanning 49–139 is the ATP-cone domain; the sequence is PQVIKQDGNR…VYRSFEDVGD (91 aa).

This sequence belongs to the NrdR family. Zn(2+) serves as cofactor.

Functionally, negatively regulates transcription of bacterial ribonucleotide reductase nrd genes and operons by binding to NrdR-boxes. In Nitrosomonas europaea (strain ATCC 19718 / CIP 103999 / KCTC 2705 / NBRC 14298), this protein is Transcriptional repressor NrdR.